The sequence spans 375 residues: tRNA-specific 2-thiouridylase MnmA (375 aa).

ATP is bound by residues 16 to 23 (GMSGGVDS) and methionine 42. The interaction with target base in tRNA stretch occupies residues 102-104 (NPD). Catalysis depends on cysteine 107, which acts as the Nucleophile. A disulfide bond links cysteine 107 and cysteine 203. Glycine 131 contacts ATP. The interaction with tRNA stretch occupies residues 153–155 (KDQ). Cysteine 203 acts as the Cysteine persulfide intermediate in catalysis. Residues 315–316 (RY) form an interaction with tRNA region.

Belongs to the MnmA/TRMU family.

The protein resides in the cytoplasm. It carries out the reaction S-sulfanyl-L-cysteinyl-[protein] + uridine(34) in tRNA + AH2 + ATP = 2-thiouridine(34) in tRNA + L-cysteinyl-[protein] + A + AMP + diphosphate + H(+). Catalyzes the 2-thiolation of uridine at the wobble position (U34) of tRNA, leading to the formation of s(2)U34. This is tRNA-specific 2-thiouridylase MnmA from Pseudomonas aeruginosa (strain UCBPP-PA14).